The sequence spans 434 residues: Nuclear envelope integral membrane protein 1b (434 aa).

Positions 1 to 29 (MAGEVEGRGCGFSLGVLVTLLVLPLPSLC) are cleaved as a signal peptide. The next 5 helical transmembrane spans lie at 151–171 (PRLF…DTLS), 175–195 (LFFY…ILVF), 206–226 (PFFA…QLVF), 239–259 (YLIV…YIYG), and 280–300 (LLMY…VIAF). The tract at residues 176–287 (FFYSTGITVG…GLLLMYVSVQ (112 aa)) is a; required for its colocalization with lamins at the nuclear envelope. The short motif at 317 to 325 (RKIKLKRAK) is the Nuclear localization signal element. Residues 326 to 395 (PGPPRLLTEE…LTPNEVSVHE (70 aa)) form a b; interaction with ran region. Residues 326–434 (PGPPRLLTEE…PLYPIPRSVF (109 aa)) form an interaction with banf1-a and banf1-b region. The tract at residues 368 to 375 (SRIQSPKR) is BAF-binding site (BBS); essential for interaction with banf1-a, banf1-b and ran.

It belongs to the NEMP family. Interacts with banf1-a and banf1-b. Interacts with ran-gtp. Phosphorylated.

The protein localises to the nucleus inner membrane. Its subcellular location is the nucleus envelope. Its function is as follows. In concert with ran, required for proper eye development. May be involved in the expression of early eye marker genes. Contributes to nuclear envelope stiffness in germ cells. Required for fertility. Essential for normal erythropoiesis. Required for efficient nuclear envelope opening and enucleation during the late stages of erythroblast maturation. The sequence is that of Nuclear envelope integral membrane protein 1b (nemp1b) from Xenopus laevis (African clawed frog).